The primary structure comprises 469 residues: MVNRIWEKRFWISCFFIIFLFILVIFQVMVELGRFEKKETKSSTVINIQKQKKPLLKEQSNSRLRHFKDNYPIMLWWSPLTGENGRLGQCGTDTCFFTINRTYLQDPMTKAILFYGTDFNIDSLPLPRKSSHEWALFHEESPKNNYKLFHEPAITLFNHTATFSRHSHMPLTSQYLEGLQALKSTDYLVSVEKKNVLRKRLSPLAYVQSDCDPPSDRDTYVQELMKYIAVDSYGECLHNKDLPQQVNNPSFMDDSQFHHILGQYKFILAFENAVCEDYITEKLWRPLKLGAVPVYFGAPNVEDWLPSNKSAIIVSRFSHPKDLAAYIKKLDKNDTLYMQFIEWKLHGNINNKRLVSAITERKWGVQDVTQDNYIDAFECMVCKRVCENVRLKEQGPSTKLWNADSAHLNCPAPEVFSFLPVHSPKSSMREMWKPSFEQSKKEAKALRTLVERNRNFTTVEFWNLVFKFW.

Over 1-9 the chain is Cytoplasmic; sequence MVNRIWEKR. The chain crosses the membrane as a helical; Signal-anchor for type II membrane protein span at residues 10 to 30; that stretch reads FWISCFFIIFLFILVIFQVMV. The Lumenal portion of the chain corresponds to 31-469; that stretch reads ELGRFEKKET…EFWNLVFKFW (439 aa). Asn100, Asn158, Asn308, and Asn333 each carry an N-linked (GlcNAc...) asparagine glycan. Cys379 and Cys382 form a disulfide bridge. Asn455 carries an N-linked (GlcNAc...) asparagine glycan.

It belongs to the glycosyltransferase 10 family.

The protein localises to the endoplasmic reticulum membrane. The catalysed reaction is L-threonyl-[protein] + GDP-beta-L-fucose = 3-O-(alpha-L-fucosyl)-L-threonyl-[protein] + GDP + H(+). It catalyses the reaction L-seryl-[protein] + GDP-beta-L-fucose = 3-O-(alpha-L-fucosyl)-L-seryl-[protein] + GDP + H(+). Its pathway is protein modification; protein glycosylation. Its function is as follows. Protein O-fucosyltransferase that specifically catalyzes O-fucosylation of serine or threonine residues in EMI domains of target proteins. Attaches fucose through an O-glycosidic linkage. O-fucosylation of EMI domain-containing proteins may be required for facilitating protein folding and secretion. This is GDP-fucose protein O-fucosyltransferase 3 (fut10) from Xenopus laevis (African clawed frog).